The primary structure comprises 210 residues: NEDD4 family-interacting protein 1-like (210 aa).

Residues 1-31 (MAEPSGRYQQLPCEEEPEAGPQVAADAPPPY) form a disordered region. Topologically, residues 1–105 (MAEPSGRYQQ…ADQLRIGNDG (105 aa)) are cytoplasmic. 2 consecutive short sequence motifs (PPxY motif) follow at residues 30–33 (PYSS) and 53–56 (PPSY). Residues 106 to 126 (IFMLTFFMAFLFNWIGFFLSF) traverse the membrane as a helical segment. At 127-132 (CLTTSA) the chain is on the extracellular side. Residues 133-153 (AGRYGAISGFGLSLIKWILIV) form a helical membrane-spanning segment. The Cytoplasmic portion of the chain corresponds to 154-161 (RFSTYFPG). A helical membrane pass occupies residues 162–182 (YFDGQYWLWWVFLVLGFLLFL). Over 183 to 210 (RGFINYAKIRKMADSFSTLPRTRVLFIY) the chain is Extracellular.

It is found in the golgi apparatus membrane. Functionally, may play a role in Golgi structure maintenance. This Danio rerio (Zebrafish) protein is NEDD4 family-interacting protein 1-like (ndfip1l).